Consider the following 278-residue polypeptide: Small ribosomal subunit protein uS3 (278 aa).

Positions 38–106 (IRKLLSKGME…QVQLNILEVK (69 aa)) constitute a KH type-2 domain. The segment at 213–278 (RQAQAAARAG…APAPAENQEG (66 aa)) is disordered. Residues 214–223 (QAQAAARAGV) show a composition bias toward low complexity. The span at 232–253 (RGGERPSRGSRGDRPTRADRGG) shows a compositional bias: basic and acidic residues. Residues 259–278 (EATGAATEQAAPAPAENQEG) show a composition bias toward low complexity.

The protein belongs to the universal ribosomal protein uS3 family. Part of the 30S ribosomal subunit. Forms a tight complex with proteins S10 and S14.

Binds the lower part of the 30S subunit head. Binds mRNA in the 70S ribosome, positioning it for translation. The chain is Small ribosomal subunit protein uS3 from Nocardioides sp. (strain ATCC BAA-499 / JS614).